A 272-amino-acid polypeptide reads, in one-letter code: Putative pyruvate, phosphate dikinase regulatory protein 1 (272 aa).

Position 151–158 (151–158 (GISRTSKT)) interacts with ADP.

The protein belongs to the pyruvate, phosphate/water dikinase regulatory protein family. PDRP subfamily.

It carries out the reaction N(tele)-phospho-L-histidyl/L-threonyl-[pyruvate, phosphate dikinase] + ADP = N(tele)-phospho-L-histidyl/O-phospho-L-threonyl-[pyruvate, phosphate dikinase] + AMP + H(+). The enzyme catalyses N(tele)-phospho-L-histidyl/O-phospho-L-threonyl-[pyruvate, phosphate dikinase] + phosphate + H(+) = N(tele)-phospho-L-histidyl/L-threonyl-[pyruvate, phosphate dikinase] + diphosphate. Functionally, bifunctional serine/threonine kinase and phosphorylase involved in the regulation of the pyruvate, phosphate dikinase (PPDK) by catalyzing its phosphorylation/dephosphorylation. This chain is Putative pyruvate, phosphate dikinase regulatory protein 1, found in Staphylococcus epidermidis (strain ATCC 35984 / DSM 28319 / BCRC 17069 / CCUG 31568 / BM 3577 / RP62A).